The primary structure comprises 231 residues: UPF0653 protein C607.02c (231 aa).

Disordered stretches follow at residues 1-33 (MPTK…VDDN), 47-68 (YHES…KKDY), 93-132 (SFKS…ENFE), and 147-178 (IESR…APPE). A compositionally biased stretch (basic and acidic residues) spans 9–27 (SVLEAERKKIGLDHAPKED). 2 stretches are compositionally biased toward basic residues: residues 53-67 (KEIK…KKKD) and 109-119 (EKKKIAKRKEK).

Belongs to the UPF0653 family.

It is found in the nucleus. The protein resides in the nucleolus. The polypeptide is UPF0653 protein C607.02c (Schizosaccharomyces pombe (strain 972 / ATCC 24843) (Fission yeast)).